The following is a 339-amino-acid chain: DNA-directed RNA polymerase subunit alpha (339 aa).

The alpha N-terminal domain (alpha-NTD) stretch occupies residues 1 to 233 (MVREEVAGST…DLFLPFLHAE (233 aa)). The interval 264–339 (KKGIPLNCIF…IDLLKNKLSF (76 aa)) is alpha C-terminal domain (alpha-CTD).

This sequence belongs to the RNA polymerase alpha chain family. In plastids the minimal PEP RNA polymerase catalytic core is composed of four subunits: alpha, beta, beta', and beta''. When a (nuclear-encoded) sigma factor is associated with the core the holoenzyme is formed, which can initiate transcription.

The protein resides in the plastid. The protein localises to the chloroplast. It catalyses the reaction RNA(n) + a ribonucleoside 5'-triphosphate = RNA(n+1) + diphosphate. Its function is as follows. DNA-dependent RNA polymerase catalyzes the transcription of DNA into RNA using the four ribonucleoside triphosphates as substrates. The polypeptide is DNA-directed RNA polymerase subunit alpha (Psathyrostachys stoloniformis).